A 465-amino-acid polypeptide reads, in one-letter code: MAPKKHSAFMVFVTEWRNHNVEGRRMTLPQAVSHCGTIWEKMTAQQRGPYQSGAKDADVADRAKRERLNCHGQGIAQVDQVQKEAAESLMHMKRSTERLVINAKKSHDLENAKFVFATFNYFTKALTTDVYVPAEFAACEYSLKEGIRSIYSSMIDPGQIIFGQGSDALHHSSTTHDLPLPPNALGEKNMAKLYRNIIDYLTKCQGGDKPLIVFTPAENIAMVKSCFRYLECEDDSKDGGRTIQVFDIEYLLFILKKEVMDVADLNDEKINKFVTDAFFKKDFFEFTAGIACQYHEDNDRTKYCTQSMVTRWAYTFSDFMCGDLAITVQPGKHIPAHTKPNYRIISSDASSLAHESSFDSFYSLPGSRVKKENQSEDVLLSSSRPSVESSSYTPTDHTAFTADLSKLCEFPSLGMRNSSKHRGLDVSAQRERNAGAWNLPTHSRSIQKFSDNDFSVTGADGKHKN.

Residues 2–69 constitute a DNA-binding region (HMG box); the sequence is APKKHSAFMV…ADRAKRERLN (68 aa). Disordered stretches follow at residues 373–394 and 419–443; these read NQSE…SYTP and SKHR…PTHS. The segment covering 381-391 has biased composition (low complexity); that stretch reads SSSRPSVESSS. Residues 422-433 show a composition bias toward basic and acidic residues; the sequence is RGLDVSAQRERN.

This sequence belongs to the maelstrom family.

The protein localises to the cytoplasm. Its subcellular location is the nucleus. Involved both in the piRNA and miRNA metabolic processes. As a component of the meiotic nuage, plays a central role during oogenesis by repressing transposable elements and preventing their mobilization, which is essential for the germline integrity. Repression of transposable elements is mediated via the piRNA metabolic process, which mediates the repression of transposable elements during meiosis by forming complexes composed of piRNAs and Piwi proteins and governs the repression of transposons. As a nuclear component, it is required for proper differentiation in the germline stem cell (GSC) lineage by repressing microRNA-7 (miR-7), thereby acting as an indirect regulator of bag-of-marbles (Bam). Acts by binding to the promoter of miR-7 gene and repressing its expression; miR-7 repression alleviates the Bam repression by miR-7, thereby allowing differentiation in the germline stem cell (GSC) lineage. In Drosophila erecta (Fruit fly), this protein is Protein maelstrom (mael).